Reading from the N-terminus, the 204-residue chain is Endothelin-3 (204 aa).

Residues 1–17 (MELRLWFLFGLTVTSAA) form the signal peptide. The tract at residues 18 to 71 (GPVPRPQPGDAGRSGVPRAPSATKETMAMVATRGPSPRSSGQEQEPGPFGELAA) is disordered. A propeptide spanning residues 18–80 (GPVPRPQPGD…AKGGPVRYRA (63 aa)) is cleaved from the precursor. 2 cysteine pairs are disulfide-bonded: Cys-83/Cys-97 and Cys-85/Cys-93. The propeptide occupies 104–204 (INTPERTVPY…KSRTDKARRL (101 aa)). Residues 115 to 140 (LSNHRGSVRGRRSAGPSPQSSQPSRG) are disordered. Low complexity predominate over residues 127–140 (SAGPSPQSSQPSRG). Residues 144 to 158 (CACAESQDRACVYFC) are endothelin-like. Residues 166–204 (GASRTPETPDKEAGKPAGRATGGLHPRRLKSRTDKARRL) form a disordered region.

Belongs to the endothelin/sarafotoxin family.

It localises to the secreted. Endothelins are endothelium-derived vasoconstrictor peptides. This chain is Endothelin-3 (EDN3), found in Sus scrofa (Pig).